Here is a 417-residue protein sequence, read N- to C-terminus: UDP-N-acetylglucosamine 1-carboxyvinyltransferase (417 aa).

22-23 (KN) is a phosphoenolpyruvate binding site. UDP-N-acetyl-alpha-D-glucosamine is bound at residue arginine 93. The Proton donor role is filled by cysteine 117. Position 117 is a 2-(S-cysteinyl)pyruvic acid O-phosphothioketal (cysteine 117). Residues 122 to 126 (RPVDQ), aspartate 304, and isoleucine 326 contribute to the UDP-N-acetyl-alpha-D-glucosamine site.

This sequence belongs to the EPSP synthase family. MurA subfamily.

The protein resides in the cytoplasm. The enzyme catalyses phosphoenolpyruvate + UDP-N-acetyl-alpha-D-glucosamine = UDP-N-acetyl-3-O-(1-carboxyvinyl)-alpha-D-glucosamine + phosphate. Its pathway is cell wall biogenesis; peptidoglycan biosynthesis. Cell wall formation. Adds enolpyruvyl to UDP-N-acetylglucosamine. This chain is UDP-N-acetylglucosamine 1-carboxyvinyltransferase, found in Neisseria meningitidis serogroup B (strain ATCC BAA-335 / MC58).